We begin with the raw amino-acid sequence, 337 residues long: uncharacterized protein (337 aa).

Residues 248–276 are a coiled coil; sequence NELKAETTIQVLREQLRQEKKLKEQVLSL. Residues 285–337 are disordered; sequence GGRGEEFGKPDETPSSASVGDDNFPSSTNHTFEARRRPSSLSSGGALKPSKIL. The span at 287-296 shows a compositional bias: basic and acidic residues; the sequence is RGEEFGKPDE. Residues 297-315 show a composition bias toward polar residues; sequence TPSSASVGDDNFPSSTNHT.

This is an uncharacterized protein from Invertebrate iridescent virus 3 (IIV-3).